A 389-amino-acid chain; its full sequence is Phospho-N-acetylmuramoyl-pentapeptide-transferase (389 aa).

Transmembrane regions (helical) follow at residues 25-45 (RAVMATITALGIGLVCGPWVI), 73-93 (TMGGVLILIGIAVATLLWGDL), 97-117 (FIWIVMLVTFGFGVIGWVDDY), 135-155 (FWQSVIGLFAAVYLAFSVSEA), 190-210 (ISYPLGVWGFIVLTYFVIVGA), 222-242 (GLVIMPVVLVGGSLGVFAYVM), 258-278 (GAGELLIFCSAMGGAGLAFLW), 286-306 (VFMGDVGALALGGALGTVAVI), 311-331 (IVLFIMGGIFVAETLSVMLQV), and 366-386 (QVVVRFWIITLMLCLFGLSTL).

The protein belongs to the glycosyltransferase 4 family. MraY subfamily. It depends on Mg(2+) as a cofactor.

The protein localises to the cell inner membrane. It carries out the reaction UDP-N-acetyl-alpha-D-muramoyl-L-alanyl-gamma-D-glutamyl-meso-2,6-diaminopimeloyl-D-alanyl-D-alanine + di-trans,octa-cis-undecaprenyl phosphate = di-trans,octa-cis-undecaprenyl diphospho-N-acetyl-alpha-D-muramoyl-L-alanyl-D-glutamyl-meso-2,6-diaminopimeloyl-D-alanyl-D-alanine + UMP. Its pathway is cell wall biogenesis; peptidoglycan biosynthesis. Functionally, catalyzes the initial step of the lipid cycle reactions in the biosynthesis of the cell wall peptidoglycan: transfers peptidoglycan precursor phospho-MurNAc-pentapeptide from UDP-MurNAc-pentapeptide onto the lipid carrier undecaprenyl phosphate, yielding undecaprenyl-pyrophosphoryl-MurNAc-pentapeptide, known as lipid I. This is Phospho-N-acetylmuramoyl-pentapeptide-transferase from Burkholderia ambifaria (strain ATCC BAA-244 / DSM 16087 / CCUG 44356 / LMG 19182 / AMMD) (Burkholderia cepacia (strain AMMD)).